A 184-amino-acid polypeptide reads, in one-letter code: Protein GrpE (184 aa).

Polar residues predominate over residues 1–14 (MANEQNEQSQDLSS). The tract at residues 1–35 (MANEQNEQSQDLSSEQTTQDHEQTQTEGVEQGAEI) is disordered.

This sequence belongs to the GrpE family. As to quaternary structure, homodimer.

The protein resides in the cytoplasm. Its function is as follows. Participates actively in the response to hyperosmotic and heat shock by preventing the aggregation of stress-denatured proteins, in association with DnaK and GrpE. It is the nucleotide exchange factor for DnaK and may function as a thermosensor. Unfolded proteins bind initially to DnaJ; upon interaction with the DnaJ-bound protein, DnaK hydrolyzes its bound ATP, resulting in the formation of a stable complex. GrpE releases ADP from DnaK; ATP binding to DnaK triggers the release of the substrate protein, thus completing the reaction cycle. Several rounds of ATP-dependent interactions between DnaJ, DnaK and GrpE are required for fully efficient folding. The protein is Protein GrpE of Acinetobacter baylyi (strain ATCC 33305 / BD413 / ADP1).